The chain runs to 276 residues: Undecaprenyl-diphosphatase (276 aa).

5 helical membrane-spanning segments follow: residues 85-105 (MNVV…EKTI), 108-128 (VLFA…AILW), 187-207 (VATE…TLYE), 217-237 (VDSV…AFAC), and 253-273 (FAWY…SGWI).

Belongs to the UppP family.

The protein localises to the cell inner membrane. The catalysed reaction is di-trans,octa-cis-undecaprenyl diphosphate + H2O = di-trans,octa-cis-undecaprenyl phosphate + phosphate + H(+). Its function is as follows. Catalyzes the dephosphorylation of undecaprenyl diphosphate (UPP). Confers resistance to bacitracin. In Burkholderia mallei (strain NCTC 10247), this protein is Undecaprenyl-diphosphatase.